An 888-amino-acid polypeptide reads, in one-letter code: Valine--tRNA ligase (888 aa).

Positions 43–53 (PFTSGTLHLGH) match the 'HIGH' region motif. Positions 534–538 (KMSKS) match the 'KMSKS' region motif. Position 537 (Lys-537) interacts with ATP.

It belongs to the class-I aminoacyl-tRNA synthetase family. ValS type 2 subfamily.

The protein localises to the cytoplasm. The enzyme catalyses tRNA(Val) + L-valine + ATP = L-valyl-tRNA(Val) + AMP + diphosphate. Functionally, catalyzes the attachment of valine to tRNA(Val). As ValRS can inadvertently accommodate and process structurally similar amino acids such as threonine, to avoid such errors, it has a 'posttransfer' editing activity that hydrolyzes mischarged Thr-tRNA(Val) in a tRNA-dependent manner. This is Valine--tRNA ligase from Thermococcus kodakarensis (strain ATCC BAA-918 / JCM 12380 / KOD1) (Pyrococcus kodakaraensis (strain KOD1)).